We begin with the raw amino-acid sequence, 80 residues long: RNA-binding protein Hfq (80 aa).

The region spanning 7-67 is the Sm domain; sequence ESFLNTARKK…ITTIVPHERL (61 aa).

The protein belongs to the Hfq family. Homohexamer.

RNA chaperone that binds small regulatory RNA (sRNAs) and mRNAs to facilitate mRNA translational regulation in response to envelope stress, environmental stress and changes in metabolite concentrations. Also binds with high specificity to tRNAs. The polypeptide is RNA-binding protein Hfq (Aquifex aeolicus (strain VF5)).